Reading from the N-terminus, the 389-residue chain is tRNA-specific 2-thiouridylase MnmA (389 aa).

ATP-binding positions include glycine 33–serine 40 and leucine 59. The Nucleophile role is filled by cysteine 120. Cysteines 120 and 219 form a disulfide. Position 145 (glycine 145) interacts with ATP. Positions lysine 169–glutamine 171 are interaction with tRNA. Catalysis depends on cysteine 219, which acts as the Cysteine persulfide intermediate. The segment at arginine 326–tyrosine 327 is interaction with tRNA.

Belongs to the MnmA/TRMU family.

Its subcellular location is the cytoplasm. The catalysed reaction is S-sulfanyl-L-cysteinyl-[protein] + uridine(34) in tRNA + AH2 + ATP = 2-thiouridine(34) in tRNA + L-cysteinyl-[protein] + A + AMP + diphosphate + H(+). Functionally, catalyzes the 2-thiolation of uridine at the wobble position (U34) of tRNA, leading to the formation of s(2)U34. The sequence is that of tRNA-specific 2-thiouridylase MnmA from Synechococcus sp. (strain WH7803).